Consider the following 456-residue polypeptide: Adenylosuccinate lyase (456 aa).

N(6)-(1,2-dicarboxyethyl)-AMP is bound by residues 15–16 (RY), 90–92 (NHD), and 122–123 (TS). The Proton donor/acceptor role is filled by His171. Residue Gln247 coordinates N(6)-(1,2-dicarboxyethyl)-AMP. Catalysis depends on Ser295, which acts as the Proton donor/acceptor. N(6)-(1,2-dicarboxyethyl)-AMP-binding positions include Ser296, 301–303 (KIN), Asn309, Arg335, and 340–344 (STVLR).

This sequence belongs to the lyase 1 family. Adenylosuccinate lyase subfamily. As to quaternary structure, homotetramer. Residues from neighboring subunits contribute catalytic and substrate-binding residues to each active site.

The catalysed reaction is N(6)-(1,2-dicarboxyethyl)-AMP = fumarate + AMP. The enzyme catalyses (2S)-2-[5-amino-1-(5-phospho-beta-D-ribosyl)imidazole-4-carboxamido]succinate = 5-amino-1-(5-phospho-beta-D-ribosyl)imidazole-4-carboxamide + fumarate. It participates in purine metabolism; AMP biosynthesis via de novo pathway; AMP from IMP: step 2/2. It functions in the pathway purine metabolism; IMP biosynthesis via de novo pathway; 5-amino-1-(5-phospho-D-ribosyl)imidazole-4-carboxamide from 5-amino-1-(5-phospho-D-ribosyl)imidazole-4-carboxylate: step 2/2. Its function is as follows. Catalyzes two reactions in de novo purine nucleotide biosynthesis. Catalyzes the breakdown of 5-aminoimidazole- (N-succinylocarboxamide) ribotide (SAICAR or 2-[5-amino-1-(5-phospho-beta-D-ribosyl)imidazole-4-carboxamido]succinate) to 5-aminoimidazole-4-carboxamide ribotide (AICAR or 5-amino-1-(5-phospho-beta-D-ribosyl)imidazole-4-carboxamide) and fumarate, and of adenylosuccinate (ADS or N(6)-(1,2-dicarboxyethyl)-AMP) to adenosine monophosphate (AMP) and fumarate. This is Adenylosuccinate lyase (purB) from Buchnera aphidicola subsp. Schizaphis graminum (strain Sg).